An 87-amino-acid chain; its full sequence is uncharacterized protein (87 aa).

The helical transmembrane segment at 25 to 47 threads the bilayer; that stretch reads FFWEVCNMILFIIIALCGYLLFS.

It localises to the membrane. This is an uncharacterized protein from Bacillus subtilis (strain 168).